Here is a 445-residue protein sequence, read N- to C-terminus: Chromosomal replication initiator protein DnaA (445 aa).

The tract at residues Met1–Lys73 is domain I, interacts with DnaA modulators. The interval Lys73–Thr106 is domain II. The interval Met107–Ser323 is domain III, AAA+ region. 4 residues coordinate ATP: Gly151, Gly153, Lys154, and Thr155. Positions Ser324 to Lys445 are domain IV, binds dsDNA.

The protein belongs to the DnaA family. As to quaternary structure, oligomerizes as a right-handed, spiral filament on DNA at oriC.

Its subcellular location is the cytoplasm. In terms of biological role, plays an essential role in the initiation and regulation of chromosomal replication. ATP-DnaA binds to the origin of replication (oriC) to initiate formation of the DNA replication initiation complex once per cell cycle. Binds the DnaA box (a 9 base pair repeat at the origin) and separates the double-stranded (ds)DNA. Forms a right-handed helical filament on oriC DNA; dsDNA binds to the exterior of the filament while single-stranded (ss)DNA is stabiized in the filament's interior. The ATP-DnaA-oriC complex binds and stabilizes one strand of the AT-rich DNA unwinding element (DUE), permitting loading of DNA polymerase. After initiation quickly degrades to an ADP-DnaA complex that is not apt for DNA replication. Binds acidic phospholipids. In Clostridium botulinum (strain Okra / Type B1), this protein is Chromosomal replication initiator protein DnaA.